A 492-amino-acid chain; its full sequence is Protein nucleotidyltransferase YdiU (492 aa).

The ATP site is built by G88, G90, R91, K111, D123, G124, R174, and R181. Catalysis depends on D250, which acts as the Proton acceptor. Residues N251 and D260 each coordinate Mg(2+). D260 provides a ligand contact to ATP.

Belongs to the SELO family. The cofactor is Mg(2+). It depends on Mn(2+) as a cofactor.

It catalyses the reaction L-seryl-[protein] + ATP = 3-O-(5'-adenylyl)-L-seryl-[protein] + diphosphate. The catalysed reaction is L-threonyl-[protein] + ATP = 3-O-(5'-adenylyl)-L-threonyl-[protein] + diphosphate. It carries out the reaction L-tyrosyl-[protein] + ATP = O-(5'-adenylyl)-L-tyrosyl-[protein] + diphosphate. The enzyme catalyses L-histidyl-[protein] + UTP = N(tele)-(5'-uridylyl)-L-histidyl-[protein] + diphosphate. It catalyses the reaction L-seryl-[protein] + UTP = O-(5'-uridylyl)-L-seryl-[protein] + diphosphate. The catalysed reaction is L-tyrosyl-[protein] + UTP = O-(5'-uridylyl)-L-tyrosyl-[protein] + diphosphate. Its function is as follows. Nucleotidyltransferase involved in the post-translational modification of proteins. It can catalyze the addition of adenosine monophosphate (AMP) or uridine monophosphate (UMP) to a protein, resulting in modifications known as AMPylation and UMPylation. The protein is Protein nucleotidyltransferase YdiU of Rhodopseudomonas palustris (strain TIE-1).